Here is a 303-residue protein sequence, read N- to C-terminus: MASRQPEVPALAPSGPLGKMSLPIGMCRRAFSYDDALEDPAPMTPPPSDMGSIPWKPVIPERKYQHLDKTEEGAASVSSLAVTPSPATDSSDKAPVVKAKATHVIMSSLITKQTQESIQRFEQQAGLRDAGYTPHKGLTTEETKYLRVAEALHKLKLQSGETAKEEKHPASAQSTPSSTPHASPKQKSRGWFPSGSSTALPAPNPHTMDPGSGNDRNSADKWSLFGPRPLQKSDSGFAIQAYKGAPRPSPMEVMRAQATRVGEDPATFKPPKMDVPMVEGKKQPLRTHNLKPRDLNVLTPTGF.

5 disordered regions span residues 1–20 (MASR…LGKM), 37–56 (LEDP…IPWK), 66–96 (HLDK…KAPV), 156–233 (KLQS…LQKS), and 260–283 (RVGE…GKKQ). Position 44 is a phosphothreonine (Thr-44). Positions 67–77 (LDKTEEGAASV) match the Flavin-containing monooxygenase motif motif. Over residues 76–89 (SVSSLAVTPSPATD) the composition is skewed to polar residues. A compositionally biased stretch (low complexity) spans 170–183 (ASAQSTPSSTPHAS). Thr-175 bears the Phosphothreonine mark. A Phosphoserine modification is found at Ser-183.

Belongs to the P33MONOX family. In terms of assembly, interacts with NELFB, NOL12 and PRNP. In terms of tissue distribution, expressed in neuronal pyramidal cells of the hippocampus and in the neurons of the cortex.

It localises to the cytoplasm. Potential NADPH-dependent oxidoreductase. May be involved in the regulation of neuronal survival, differentiation and axonal outgrowth. The chain is Putative monooxygenase p33MONOX (P33monox) from Mus musculus (Mouse).